The sequence spans 1312 residues: DNA repair protein RAD50.L (1312 aa).

The ATP site is built by Arg-13, Asn-38, Gly-39, Gly-41, Lys-42, Thr-43, Thr-44, Val-67, Asp-69, and Gln-159. Mg(2+) is bound at residue Thr-43. Gln-159 contributes to the Mg(2+) binding site. Coiled-coil stretches lie at residues 203-342, 415-558, and 587-628; these read VREY…LNRE, LREF…IKSR, and INQT…FEEK. In terms of domain architecture, Zinc-hook spans 635 to 734; it reads SQDFDSDLSR…RKDDMMELKP (100 aa). Residues Cys-681 and Cys-684 each contribute to the Zn(2+) site. The stretch at 712-1070 forms a coiled coil; that stretch reads LKSAEGELKR…ENKSESLKTN (359 aa).

The protein belongs to the SMC family. RAD50 subfamily. As to quaternary structure, component of the MRN complex composed of two heterodimers RAD50 and MRE11 associated with a single NBN. Requires Zn(2+) as cofactor.

The protein resides in the nucleus. Its subcellular location is the chromosome. The protein localises to the telomere. The catalysed reaction is ATP + H2O = ADP + phosphate + H(+). In terms of biological role, component of the MRN complex, which plays a central role in double-strand break (DSB) repair, DNA recombination, maintenance of telomere integrity and meiosis. The MRN complex is involved in the repair of DNA double-strand breaks (DSBs) via homologous recombination (HR), an error-free mechanism which primarily occurs during S and G2 phases. The complex (1) mediates the end resection of damaged DNA, which generates proper single-stranded DNA, a key initial steps in HR, and is (2) required for the recruitment of other repair factors and efficient activation of ATM and ATR upon DNA damage. The MRN complex possesses single-strand endonuclease activity and double-strand-specific 3'-5' exonuclease activity, which are provided by mre11, to initiate end resection, which is required for single-strand invasion and recombination. Within the complex, rad50 is both required to bind DNA ends and hold them in close proximity and regulate the activity of MRE11. Rad50 provides an ATP-dependent control of MRE11 by positioning DNA ends into the mre11 active site: ATP-binding induces a large structural change from an open form with accessible MRE11 nuclease sites into a closed form. The MRN complex is also required for DNA damage signaling via activation of the atm and atr kinases: the nuclease activity of mre11 is not required to activate ATM and ATR. The MRN complex promotes recruitment of topbp1 to DNA damage sites. The MRN complex and rbbp8/CtIP are also required for chromosome alignment during metaphase. This Xenopus laevis (African clawed frog) protein is DNA repair protein RAD50.L.